A 306-amino-acid chain; its full sequence is Palmitoyl-protein thioesterase 1 (306 aa).

An N-terminal signal peptide occupies residues 1-27; the sequence is MASPSCLWLLAVALLPWTCAARALHHL. Intrachain disulfides connect Cys45-Cys46, Cys96-Cys128, and Cys152-Cys160. Ser115 is a catalytic residue. 3 N-linked (GlcNAc...) asparagine glycosylation sites follow: Asn197, Asn212, and Asn232. Active-site residues include Asp233 and His289.

The protein belongs to the palmitoyl-protein thioesterase family. In terms of assembly, interacts with CLN5, ATP5F1A and ATP5F1B. Post-translationally, glycosylated.

It localises to the lysosome. It is found in the secreted. The protein resides in the golgi apparatus. The protein localises to the endoplasmic reticulum. The catalysed reaction is S-hexadecanoyl-L-cysteinyl-[protein] + H2O = L-cysteinyl-[protein] + hexadecanoate + H(+). The enzyme catalyses hexadecanoyl-CoA + H2O = hexadecanoate + CoA + H(+). It carries out the reaction S-hexadecanoyl-N-acetylcysteamine + H2O = N-acetylcysteamine + hexadecanoate + H(+). It catalyses the reaction S-hexadecanoyl-N-acetylcysteine methyl ester + H2O = N-acetylcysteine methyl ester + hexadecanoate + H(+). Its activity is regulated as follows. Palmitoylation reduces PPT1 enzymatic activity. Has thioesterase activity against fatty acid thioesters with 14 -18 carbons, including palmitoyl-CoA, S-palmitoyl-N-acetylcysteamine, and palmitoylated proteins. In contrast to PPT2, PPT1 can hydrolyze palmitoylated proteins and palmitoylcysteine. In Macaca fascicularis (Crab-eating macaque), this protein is Palmitoyl-protein thioesterase 1 (PPT1).